We begin with the raw amino-acid sequence, 421 residues long: tRNA (guanine-N(7)-)-methyltransferase non-catalytic subunit TRM82 (421 aa).

3 WD repeats span residues 72 to 112 (AVYS…EDPE), 170 to 212 (GHVS…IVDK), and 216 to 258 (GHKE…SQYS).

The protein belongs to the WD repeat TRM82 family. In terms of assembly, forms a heterodimer with the catalytic subunit TRM8.

It localises to the nucleus. The protein operates within tRNA modification; N(7)-methylguanine-tRNA biosynthesis. Functionally, required for the formation of N(7)-methylguanine at position 46 (m7G46) in tRNA. In the complex, it is required to stabilize and induce conformational changes of the catalytic subunit. The polypeptide is tRNA (guanine-N(7)-)-methyltransferase non-catalytic subunit TRM82 (Candida glabrata (strain ATCC 2001 / BCRC 20586 / JCM 3761 / NBRC 0622 / NRRL Y-65 / CBS 138) (Yeast)).